Reading from the N-terminus, the 669-residue chain is Putative heme-binding protein rrnAC3100 (669 aa).

Residue histidine 181 participates in heme binding. Disordered stretches follow at residues 260–351 (RVPT…PDVS) and 451–477 (LGGS…ESSQ). The region spanning 579–667 (GTMGMFYTVK…VLADRPRHVF (89 aa)) is the ABM domain.

It in the N-terminal section; belongs to the ChdC family.

The protein is Putative heme-binding protein rrnAC3100 of Haloarcula marismortui (strain ATCC 43049 / DSM 3752 / JCM 8966 / VKM B-1809) (Halobacterium marismortui).